Reading from the N-terminus, the 367-residue chain is 3-dehydroquinate synthase (367 aa).

Residues 69-74, 103-107, 127-128, K140, K149, and 167-170 contribute to the NAD(+) site; these read DGEAFK, GVVGD, TT, and TLAT. Residues E182, H245, and H262 each coordinate Zn(2+).

Belongs to the sugar phosphate cyclases superfamily. Dehydroquinate synthase family. It depends on Co(2+) as a cofactor. The cofactor is Zn(2+). Requires NAD(+) as cofactor.

Its subcellular location is the cytoplasm. The catalysed reaction is 7-phospho-2-dehydro-3-deoxy-D-arabino-heptonate = 3-dehydroquinate + phosphate. Its pathway is metabolic intermediate biosynthesis; chorismate biosynthesis; chorismate from D-erythrose 4-phosphate and phosphoenolpyruvate: step 2/7. In terms of biological role, catalyzes the conversion of 3-deoxy-D-arabino-heptulosonate 7-phosphate (DAHP) to dehydroquinate (DHQ). The chain is 3-dehydroquinate synthase from Azotobacter vinelandii (strain DJ / ATCC BAA-1303).